The following is a 325-amino-acid chain: L-lactate dehydrogenase 1 (325 aa).

NAD(+) is bound by residues Val-17, Asp-38, Lys-43, Tyr-68, and 82 to 83 (GA). Substrate contacts are provided by residues Gln-85, Arg-91, and 123–126 (NPVD). NAD(+) contacts are provided by residues 121–123 (AAN) and Ser-146. 151-154 (DTAR) lines the substrate pocket. Beta-D-fructose 1,6-bisphosphate is bound by residues Arg-156 and His-171. His-178 (proton acceptor) is an active-site residue. Phosphotyrosine is present on Tyr-223. Thr-232 contributes to the substrate binding site.

It belongs to the LDH/MDH superfamily. LDH family. Homotetramer.

The protein localises to the cytoplasm. The enzyme catalyses (S)-lactate + NAD(+) = pyruvate + NADH + H(+). It participates in fermentation; pyruvate fermentation to lactate; (S)-lactate from pyruvate: step 1/1. Allosterically activated by fructose 1,6-bisphosphate (FBP). In terms of biological role, catalyzes the conversion of lactate to pyruvate. This is L-lactate dehydrogenase 1 from Lactococcus lactis subsp. lactis (strain IL1403) (Streptococcus lactis).